Reading from the N-terminus, the 1249-residue chain is MVHPVQVGKRTRMSFGKVKDVTEMPNLIEVQLDSYQWFLREGLHEVFEDINPITNFTGNLVLEFVDYKLDMDNIKYSVEECKERDATYAAPLKVSVRLQNNETGEIKEQEVFMGDFPLMTEQGTFIINGAERVIVSQLVRSPGVYYNYSIDKTGKKLYSATVIPNRGAWLEYETDSNDIIYVRIDKTRKLPITILARAMGFGSDQELLDFFGEDERFRASIEKDNTKTREEGLLEIYKRLRPGEPPTVDSAISLIDSLFFDAKRYDLSRVGRYKFNKKLALNLRIANQIAAMDVINPSTGEIMVEKGQKISRLLAEDIQNAGIKSVDILVDDKLVRVISNNFVDITKQVPFDVSDLQIKELVHYPTLREILDNYSDETTIKEEIKKNLSRLIPKHIIKDDIFATISYELGLPYGIGYVDDIDHLGNRRLRSVGELLQNQFRIGLSRMERVVKERMTIQDQESITPQMLINIRPVAAAIKEFFGSSQLSQFMDQTNPLSELTHKRRLSALGPGGLSRERAGFEVRDVHHSHYGRMCPIETPEGPNIGLINSLATFARVNEYGFIETPYRIVDKENARATEEIRYFTADEEDQCLIAQAKEPLDENGYFVDKKVTVRYLEDVLVVPATDVDLMDVSARQIVSVATAMIPFLENDDASRALMGSNMQRQAVPLLKPQAPIVGTGIEFKAAVDSGVLPKARNAGVVTFVSANEIRVKRDSDGGTDNYRLLKFKRSNQSSCINQRPIVNKGEIVFKNQVLADGPSTDLGEIALGKNIRMGFITWEGYNYEDAMLISEELVREDVFTSMHIEEYECEARDTKLGPEEITRDIPNVSEDALKDIDDRGIIRIGAEVRSGDILVGKVTPKGETELTAEERLLRAIFGEKAREVRDTSLRVPHGEAGIIVDIKVFTRENGDELNPGVNELVRCYIVQKRKISVGDKMAGRHGNKGVISRILPEEDMPFLPDGRPLQICLNPLGVPSRMNIGQVLEVHLGWAASKLGWHISTPVFDGATENEIEECLEKAGYNANGKTVLYDGRTGEPFDNLVTVGIMYILKLAHLVDDKIHARSTGPYSLVTQQPLGGKAQFGGQRFGEMEVWALEAYGAAHTLQEILTVKSDDVVGRVKTYEAIVKGENIPEPGVPESFKVLIKELQALCLDVKVLNENHQEVSLKEYTDDEIADLEVNIEGSEESVPVVPVVESNIEEVEVEVEVEVETETEDGYREDLDEIEYDENFEIETLETDLELDDFNDEH.

It belongs to the RNA polymerase beta chain family. The RNAP catalytic core consists of 2 alpha, 1 beta, 1 beta' and 1 omega subunit. When a sigma factor is associated with the core the holoenzyme is formed, which can initiate transcription.

The enzyme catalyses RNA(n) + a ribonucleoside 5'-triphosphate = RNA(n+1) + diphosphate. DNA-dependent RNA polymerase catalyzes the transcription of DNA into RNA using the four ribonucleoside triphosphates as substrates. The protein is DNA-directed RNA polymerase subunit beta of Clostridium botulinum (strain Eklund 17B / Type B).